A 218-amino-acid polypeptide reads, in one-letter code: Thiopurine S-methyltransferase (218 aa).

S-adenosyl-L-methionine contacts are provided by Trp-10, Leu-45, Glu-66, and Arg-123.

Belongs to the class I-like SAM-binding methyltransferase superfamily. TPMT family.

Its subcellular location is the cytoplasm. The enzyme catalyses S-adenosyl-L-methionine + a thiopurine = S-adenosyl-L-homocysteine + a thiopurine S-methylether.. The sequence is that of Thiopurine S-methyltransferase from Shewanella denitrificans (strain OS217 / ATCC BAA-1090 / DSM 15013).